Consider the following 373-residue polypeptide: Chaperone protein DnaJ (373 aa).

A J domain is found at 4–68 (DYYEILGLTK…VKREQYNQFG (65 aa)). A CR-type zinc finger spans residues 142–224 (GKEIVEPLEK…CKGKTHTKTT (83 aa)). Residues Cys155, Cys158, Cys172, Cys175, Cys198, Cys201, Cys212, and Cys215 each contribute to the Zn(2+) site. CXXCXGXG motif repeat units lie at residues 155–162 (CNTCNGSG), 172–179 (CTQCSGMG), 198–205 (CSKCNGIG), and 212–219 (CLICKGKT).

It belongs to the DnaJ family. Homodimer. It depends on Zn(2+) as a cofactor.

Its subcellular location is the cytoplasm. Participates actively in the response to hyperosmotic and heat shock by preventing the aggregation of stress-denatured proteins and by disaggregating proteins, also in an autonomous, DnaK-independent fashion. Unfolded proteins bind initially to DnaJ; upon interaction with the DnaJ-bound protein, DnaK hydrolyzes its bound ATP, resulting in the formation of a stable complex. GrpE releases ADP from DnaK; ATP binding to DnaK triggers the release of the substrate protein, thus completing the reaction cycle. Several rounds of ATP-dependent interactions between DnaJ, DnaK and GrpE are required for fully efficient folding. Also involved, together with DnaK and GrpE, in the DNA replication of plasmids through activation of initiation proteins. This chain is Chaperone protein DnaJ, found in Mycoplasma mobile (strain ATCC 43663 / 163K / NCTC 11711) (Mesomycoplasma mobile).